The chain runs to 309 residues: Probable manganese-dependent inorganic pyrophosphatase (309 aa).

Mn(2+) contacts are provided by H9, D13, D15, D75, H97, and D149.

This sequence belongs to the PPase class C family. Requires Mn(2+) as cofactor.

The protein resides in the cytoplasm. The catalysed reaction is diphosphate + H2O = 2 phosphate + H(+). The chain is Probable manganese-dependent inorganic pyrophosphatase from Bacillus anthracis (strain CDC 684 / NRRL 3495).